Consider the following 464-residue polypeptide: ESX-1 secretion system protein EccE1 (464 aa).

2 helical membrane passes run 11–31 and 34–54; these read FTTGHGIWAATLIPACIAICM and DLLWLGITLGALIALFSVLTI.

Belongs to the EccE family. In terms of assembly, part of the ESX-1 / type VII secretion system (T7SS), which is composed of cytosolic and membrane components. The ESX-1 membrane complex is composed of EccB1, EccCa1, EccCb1, EccD1 and EccE1.

The protein localises to the cell inner membrane. Its function is as follows. Part of the ESX-1 / type VII specialized secretion system (T7SS), which exports several proteins including EsxA and EsxB. Plays a role in DNA conjugation, in at least a donor strain. The sequence is that of ESX-1 secretion system protein EccE1 from Mycolicibacterium smegmatis (strain ATCC 700084 / mc(2)155) (Mycobacterium smegmatis).